The chain runs to 153 residues: Ribosome maturation factor RimP (153 aa).

The protein belongs to the RimP family.

Its subcellular location is the cytoplasm. In terms of biological role, required for maturation of 30S ribosomal subunits. The chain is Ribosome maturation factor RimP from Rippkaea orientalis (strain PCC 8801 / RF-1) (Cyanothece sp. (strain PCC 8801)).